The following is a 359-amino-acid chain: Stearoyl-CoA desaturase (359 aa).

Residues 1 to 72 lie on the Cytoplasmic side of the membrane; sequence MPAHLLQDDI…EGPSPKVEYV (72 aa). Residues 73 to 93 traverse the membrane as a helical segment; sequence WRNIILMSLLHLGALYGITLI. Asparagine 75 serves as a coordination point for substrate. Topologically, residues 94 to 97 are lumenal; sequence PTCK. The helical transmembrane segment at 98–118 threads the bilayer; that stretch reads FYTWLWGVFYYFVSALGITAG. At 119-217 the chain is on the cytoplasmic side; it reads AHRLWSHRSY…EKLVMFQRRY (99 aa). Fe cation contacts are provided by histidine 120 and histidine 125. The Histidine box-1 motif lies at 120-125; the sequence is HRLWSH. Asparagine 148, arginine 155, and aspartate 156 together coordinate substrate. Fe cation is bound by residues histidine 157, histidine 160, and histidine 161. The Histidine box-2 motif lies at 157–161; it reads HRAHH. Arginine 188 and lysine 189 together coordinate substrate. Phosphoserine is present on residues serine 198 and serine 203. A helical membrane pass occupies residues 218–237; that stretch reads YKPGLLMMCFILPTLVPWYF. The Lumenal portion of the chain corresponds to 238-241; that stretch reads WGET. Residues 242 to 263 form a helical membrane-spanning segment; it reads FQNSVFVATFLRYAVVLNATWL. Tryptophan 262 contributes to the substrate binding site. Residues 264 to 359 are Cytoplasmic-facing; it reads VNSAAHLFGY…RTGDGNYKSG (96 aa). Positions 269, 298, 301, and 302 each coordinate Fe cation. Positions 298-302 match the Histidine box-3 motif; it reads HNYHH.

This sequence belongs to the fatty acid desaturase type 1 family. As to quaternary structure, may self-associate and form homodimers. It depends on Fe(2+) as a cofactor. Detected in fetal liver, lung and brain. Highly expressed in adult adipose tissue, and at lower levels in adult brain and lung.

It localises to the endoplasmic reticulum membrane. The enzyme catalyses octadecanoyl-CoA + 2 Fe(II)-[cytochrome b5] + O2 + 2 H(+) = (9Z)-octadecenoyl-CoA + 2 Fe(III)-[cytochrome b5] + 2 H2O. It carries out the reaction hexadecanoyl-CoA + 2 Fe(II)-[cytochrome b5] + O2 + 2 H(+) = (9Z)-hexadecenoyl-CoA + 2 Fe(III)-[cytochrome b5] + 2 H2O. In terms of biological role, stearoyl-CoA desaturase that utilizes O(2) and electrons from reduced cytochrome b5 to introduce the first double bond into saturated fatty acyl-CoA substrates. Catalyzes the insertion of a cis double bond at the delta-9 position into fatty acyl-CoA substrates including palmitoyl-CoA and stearoyl-CoA. Gives rise to a mixture of 16:1 and 18:1 unsaturated fatty acids. Plays an important role in lipid biosynthesis. Plays an important role in regulating the expression of genes that are involved in lipogenesis and in regulating mitochondrial fatty acid oxidation. Plays an important role in body energy homeostasis. Contributes to the biosynthesis of membrane phospholipids, cholesterol esters and triglycerides. This is Stearoyl-CoA desaturase (SCD) from Homo sapiens (Human).